The sequence spans 497 residues: Squalene monooxygenase (497 aa).

Residues 29 to 30, 49 to 50, Arg57, Arg159, Val175, Asp336, and Met349 each bind FAD; these read VV and ER. 2 helical membrane passes run 434–454 and 467–487; these read FLSG…TVAL and LGFL…AKVF.

Belongs to the squalene monooxygenase family. Requires FAD as cofactor.

It is found in the microsome membrane. Its subcellular location is the endoplasmic reticulum membrane. The catalysed reaction is squalene + reduced [NADPH--hemoprotein reductase] + O2 = (S)-2,3-epoxysqualene + oxidized [NADPH--hemoprotein reductase] + H2O + H(+). The protein operates within terpene metabolism; lanosterol biosynthesis; lanosterol from farnesyl diphosphate: step 2/3. Functionally, catalyzes the stereospecific oxidation of squalene to (S)-2,3-epoxysqualene, and is considered to be a rate-limiting enzyme in steroid biosynthesis. In Eremothecium gossypii (strain ATCC 10895 / CBS 109.51 / FGSC 9923 / NRRL Y-1056) (Yeast), this protein is Squalene monooxygenase (ERG1).